A 953-amino-acid chain; its full sequence is Zinc finger protein 507 (953 aa).

Ser95 carries the post-translational modification Phosphoserine. 3 C2H2-type zinc fingers span residues 125 to 147 (YQCSLCKFLSSSFSVLKDHIKQH), 155 to 185 (LMCSECHITSRSQEELEAHVVNDHDNDANIH), and 248 to 270 (YRCLFCSYTCGQQRMLKTHAWKH). Phosphoserine is present on Ser427. Residues 470-489 (KGLATDENAPPGRRRTNSES) are disordered. 5 C2H2-type zinc fingers span residues 641–663 (YRCRLCHYTSGNKGYIKQHLRVH), 669–691 (YQCPICEHIADNSKDLESHMIHH), 697–720 (YQCKQCEESFHYKSQLRNHEREQH), 758–780 (YRCDVCDYTSTTYVGVRNHRRIH), and 786–808 (YRCSLCGYVCSHPPSLKSHMWKH). The segment at 831–891 (GRVLGKTPGK…KLSPTSNTSY (61 aa)) is disordered. Residues 854 to 891 (TGSSENAVSSSELMSQTPSEVLGTNENEKLSPTSNTSY) show a composition bias toward polar residues. Residues 911 to 933 (FCCCICGFESTSKENLLDHMKEH) form a C2H2-type 9 zinc finger.

Belongs to the krueppel C2H2-type zinc-finger protein family.

It localises to the nucleus. May be involved in transcriptional regulation. The sequence is that of Zinc finger protein 507 (ZNF507) from Pongo abelii (Sumatran orangutan).